A 129-amino-acid chain; its full sequence is Glycine cleavage system H protein (129 aa).

In terms of domain architecture, Lipoyl-binding spans Thr-24–Lys-106. Position 65 is an N6-lipoyllysine (Lys-65).

Belongs to the GcvH family. As to quaternary structure, the glycine cleavage system is composed of four proteins: P, T, L and H. It depends on (R)-lipoate as a cofactor.

Functionally, the glycine cleavage system catalyzes the degradation of glycine. The H protein shuttles the methylamine group of glycine from the P protein to the T protein. This Escherichia coli O7:K1 (strain IAI39 / ExPEC) protein is Glycine cleavage system H protein.